The following is a 262-amino-acid chain: Acyl-[acyl-carrier-protein]--UDP-N-acetylglucosamine O-acyltransferase (262 aa).

It belongs to the transferase hexapeptide repeat family. LpxA subfamily. Homotrimer.

The protein localises to the cytoplasm. The enzyme catalyses a (3R)-hydroxyacyl-[ACP] + UDP-N-acetyl-alpha-D-glucosamine = a UDP-3-O-[(3R)-3-hydroxyacyl]-N-acetyl-alpha-D-glucosamine + holo-[ACP]. The protein operates within glycolipid biosynthesis; lipid IV(A) biosynthesis; lipid IV(A) from (3R)-3-hydroxytetradecanoyl-[acyl-carrier-protein] and UDP-N-acetyl-alpha-D-glucosamine: step 1/6. In terms of biological role, involved in the biosynthesis of lipid A, a phosphorylated glycolipid that anchors the lipopolysaccharide to the outer membrane of the cell. The polypeptide is Acyl-[acyl-carrier-protein]--UDP-N-acetylglucosamine O-acyltransferase (Campylobacter curvus (strain 525.92)).